We begin with the raw amino-acid sequence, 141 residues long: Acetyltransferase YE1169 (141 aa).

The N-acetyltransferase domain occupies 1 to 141; sequence MEIRVFQQSD…GKRLIVDQEY (141 aa).

The protein belongs to the acetyltransferase family. YpeA subfamily.

In Yersinia enterocolitica serotype O:8 / biotype 1B (strain NCTC 13174 / 8081), this protein is Acetyltransferase YE1169.